The chain runs to 160 residues: NADH-quinone oxidoreductase subunit I (160 aa).

4Fe-4S ferredoxin-type domains lie at 52–81 (RRYS…IEAE) and 91–120 (TRYD…EGPN). 8 residues coordinate [4Fe-4S] cluster: cysteine 61, cysteine 64, cysteine 67, cysteine 71, cysteine 100, cysteine 103, cysteine 106, and cysteine 110.

Belongs to the complex I 23 kDa subunit family. As to quaternary structure, NDH-1 is composed of 14 different subunits. Subunits NuoA, H, J, K, L, M, N constitute the membrane sector of the complex. It depends on [4Fe-4S] cluster as a cofactor.

The protein resides in the cell membrane. It catalyses the reaction a quinone + NADH + 5 H(+)(in) = a quinol + NAD(+) + 4 H(+)(out). NDH-1 shuttles electrons from NADH, via FMN and iron-sulfur (Fe-S) centers, to quinones in the respiratory chain. The immediate electron acceptor for the enzyme in this species is believed to be ubiquinone. Couples the redox reaction to proton translocation (for every two electrons transferred, four hydrogen ions are translocated across the cytoplasmic membrane), and thus conserves the redox energy in a proton gradient. The chain is NADH-quinone oxidoreductase subunit I from Wolbachia sp. subsp. Brugia malayi (strain TRS).